The following is a 484-amino-acid chain: GTPase Obg (484 aa).

One can recognise an Obg domain in the interval 7-164 (PRFVDRVVIH…RDLTLELKTV (158 aa)). The tract at residues 21-43 (SGGNGCASVHREKFKPLGGPDGG) is disordered. In terms of domain architecture, OBG-type G spans 165–345 (ADVGLVGFPS…LIFGLSQMIS (181 aa)). GTP is bound by residues 171–178 (GFPSAGKS), 196–200 (FTTLV), 217–220 (DVPG), 297–300 (NKID), and 326–328 (STA). Mg(2+) contacts are provided by serine 178 and threonine 198. One can recognise an OCT domain in the interval 363–441 (PIPVDDSGFT…IGEMTFDWEP (79 aa)). Residues 439 to 484 (WEPQTPAGEPVAMSGRGTDPRLDSNKRVGAAERKAARSRRREHGDG) form a disordered region. Residues 456–473 (TDPRLDSNKRVGAAERKA) are compositionally biased toward basic and acidic residues. Over residues 474 to 484 (ARSRRREHGDG) the composition is skewed to basic residues.

This sequence belongs to the TRAFAC class OBG-HflX-like GTPase superfamily. OBG GTPase family. In terms of assembly, monomer. It depends on Mg(2+) as a cofactor.

It localises to the cytoplasm. In terms of biological role, an essential GTPase which binds GTP, GDP and possibly (p)ppGpp with moderate affinity, with high nucleotide exchange rates and a fairly low GTP hydrolysis rate. Plays a role in control of the cell cycle, stress response, ribosome biogenesis and in those bacteria that undergo differentiation, in morphogenesis control. In Mycobacterium tuberculosis (strain CDC 1551 / Oshkosh), this protein is GTPase Obg.